A 259-amino-acid polypeptide reads, in one-letter code: UPF0758 protein Bphyt_3148 (259 aa).

In terms of domain architecture, MPN spans 137 to 259 (LLNSPEAVEN…VYSFARAGWP (123 aa)). Positions 208, 210, and 221 each coordinate Zn(2+). Residues 208–221 (HNHPSGAVQPSASD) carry the JAMM motif motif.

Belongs to the UPF0758 family.

This chain is UPF0758 protein Bphyt_3148, found in Paraburkholderia phytofirmans (strain DSM 17436 / LMG 22146 / PsJN) (Burkholderia phytofirmans).